The sequence spans 178 residues: Transcription termination/antitermination protein NusG (178 aa).

Residues 126-156 (VGQQVRVNEGPFADFNGVVEEVNYERNKLRV) form the KOW domain.

Belongs to the NusG family.

In terms of biological role, participates in transcription elongation, termination and antitermination. This is Transcription termination/antitermination protein NusG from Neisseria meningitidis serogroup B (strain ATCC BAA-335 / MC58).